The primary structure comprises 146 residues: Hut operon positive regulatory protein (146 aa).

Belongs to the HutP family. In terms of assembly, homohexamer.

Antiterminator that binds to cis-acting regulatory sequences on the mRNA in the presence of histidine, thereby suppressing transcription termination and activating the hut operon for histidine utilization. The polypeptide is Hut operon positive regulatory protein (Bacillus cereus (strain AH820)).